Here is a 428-residue protein sequence, read N- to C-terminus: Mitochondrial import inner membrane translocase subunit TIM50-C (428 aa).

Residues 59-79 (LFTCTALPAAAPALFSILHTA) traverse the membrane as a helical segment. The Mitochondrial intermembrane portion of the chain corresponds to 80 to 428 (RGYSSTTKQE…KQWSRNILGR (349 aa)). The disordered stretch occupies residues 112–138 (FPQTSPEVDSNAEQERKKREEEEEKEN). Positions 124 to 138 (EQERKKREEEEEKEN) are enriched in basic and acidic residues. Residues 224-367 (YVQPRYTLVL…LDLIAFLKII (144 aa)) form the FCP1 homology domain.

Belongs to the TIM50 family. As to quaternary structure, component of the TIM23 complex at least composed of Tim23, Tim17 (Tim17a1, Tim17a2 or Tim17b1) and a Tim50.

Its subcellular location is the mitochondrion inner membrane. Its function is as follows. Essential component of the TIM23 complex, a complex that mediates the translocation of transit peptide-containing proteins across the mitochondrial inner membrane. This Drosophila melanogaster (Fruit fly) protein is Mitochondrial import inner membrane translocase subunit TIM50-C (ttm50).